The chain runs to 142 residues: Large ribosomal subunit protein uL11 (142 aa).

The protein belongs to the universal ribosomal protein uL11 family. In terms of assembly, part of the ribosomal stalk of the 50S ribosomal subunit. Interacts with L10 and the large rRNA to form the base of the stalk. L10 forms an elongated spine to which L12 dimers bind in a sequential fashion forming a multimeric L10(L12)X complex. Post-translationally, one or more lysine residues are methylated.

Forms part of the ribosomal stalk which helps the ribosome interact with GTP-bound translation factors. This chain is Large ribosomal subunit protein uL11, found in Nitrobacter hamburgensis (strain DSM 10229 / NCIMB 13809 / X14).